Reading from the N-terminus, the 586-residue chain is Alpha-1,2-mannosyltransferase MNN5 (586 aa).

A signal peptide spans 1 to 29 (MLIRLKKRKILQVIVSAVVLILFFCSVHN). N-linked (GlcNAc...) asparagine glycosylation is found at asparagine 113, asparagine 136, asparagine 259, and asparagine 264.

The protein belongs to the MNN1/MNT family. In terms of processing, glycosylated.

It is found in the golgi apparatus. The protein resides in the cis-Golgi network. Its pathway is protein modification; protein glycosylation. Its function is as follows. Responsible for addition of first and second mannose residues to the outer chain of core N-linked polysaccharides and to O-linked mannotriose. Implicated in late Golgi modifications. This Saccharomyces cerevisiae (strain YJM789) (Baker's yeast) protein is Alpha-1,2-mannosyltransferase MNN5 (MNN5).